The chain runs to 302 residues: Probable 2-(5''-triphosphoribosyl)-3'-dephosphocoenzyme-A synthase 1 (302 aa).

The protein belongs to the CitG/MdcB family.

It catalyses the reaction 3'-dephospho-CoA + ATP = 2'-(5''-triphospho-alpha-D-ribosyl)-3'-dephospho-CoA + adenine. This chain is Probable 2-(5''-triphosphoribosyl)-3'-dephosphocoenzyme-A synthase 1, found in Salmonella paratyphi A (strain ATCC 9150 / SARB42).